Reading from the N-terminus, the 787-residue chain is MFDGFSNNKGKRRSFFRFGSESKNNDSEKSVRKPSVPSTIKKSTNIARTSTAETSAPDIPPRSPNRNAHSRSHSIQAPLQKETLKNTNPFLNAEDTLGDSLELTQSKEASGNDHKGIEYLQENNIIGQRTNPFTTSANSNAHFSKIKRSRPPPPPMDMKSITTSISNNTTKEEIESNNDSERDSIAISSTHNQHRRQRSEAEKLVDDIENYINEHKVSSGSSLSLDTSENSDTKASQDKLPVDVMEAPILRNVSAESSLSYVKPLIVDNEEVNKASNGNLVQSDHLKEFSSNLDDGDDKFSFSTSASGKSTKSLQQVSKDESSGFKAAHFDFAYKSNEHLGSDGSIASARKPLRITNEIDSGSSNEDDDDGLQEKGFVDSESKAFINYASDQGSSIKNDVSTQEPELPSHRRIFRVVNEDRPSFYLNSVNDTGSLTDKHSFDTASSGEYDAKSNFSSQSGLSISKGSKSTVLAALDSNGNTKSSNKTSELNSLNSISESLVPAAHSFNEHTVTIPATVDLPNPVHDAPSERSVKCSPLTSVVSNKSEKSVPLVSSYVEELRLKYYKTSNFLQAPPNLPVALKQKNNLIQPKNIKVKLRTSSKQIGIKHGKVKQKLLALETRNEESDGTATGLKNKINVDHTKEFHKLLGKENETGSISKKEGTDAEQAEDYLKDIPGDEAYNSDDIMAPLREKRGQNGSVDSVSRSNTVVSYYTRSQNRMRSGTLDNDYVNRQKLPTHISLQDYRDANARSNISRQDSVSTTNSDVVDLSYSLGHGLRVANPDSDPE.

At M1 the chain carries N-acetylmethionine. 3 disordered regions span residues 1-115, 130-200, and 217-238; these read MFDG…NDHK, TNPF…QRSE, and VSSG…ASQD. The segment covering 36–54 has biased composition (polar residues); it reads VPSTIKKSTNIARTSTAET. A Phosphoserine modification is found at S63. Residues 130–142 show a composition bias toward polar residues; it reads TNPFTTSANSNAH. Positions 160–169 are enriched in low complexity; that stretch reads SITTSISNNT. Over residues 170–184 the composition is skewed to basic and acidic residues; sequence TKEEIESNNDSERDS. Low complexity predominate over residues 218–230; sequence SSGSSLSLDTSEN. 10 positions are modified to phosphoserine: S254, S313, S342, S345, S390, S477, S492, S546, S683, and S699.

The protein localises to the cytoplasm. This is an uncharacterized protein from Saccharomyces cerevisiae (strain ATCC 204508 / S288c) (Baker's yeast).